The sequence spans 2220 residues: Calcineurin-binding protein cabin-1 (2220 aa).

2 positions are modified to phosphoserine: serine 10 and serine 11. Threonine 12 is subject to Phosphothreonine. Serine 20 and serine 66 each carry phosphoserine. 3 TPR repeats span residues alanine 36–arginine 69, tyrosine 90–aspartate 123, and asparagine 125–histidine 157. Residues glycine 361 to threonine 400 form a disordered region. The segment covering isoleucine 382–lysine 391 has biased composition (basic and acidic residues). Residues serine 433 and serine 450 each carry the phosphoserine modification. The stretch at valine 615–serine 648 is one TPR 4 repeat. Serine 673 carries the post-translational modification Phosphoserine. TPR repeat units lie at residues asparagine 1055–arginine 1088 and lysine 1106–asparagine 1139. 4 disordered regions span residues phenylalanine 1299–threonine 1476, alanine 1668–arginine 1845, alanine 1916–serine 2165, and valine 2197–isoleucine 2220. Basic and acidic residues predominate over residues arginine 1301 to histidine 1324. A compositionally biased stretch (low complexity) spans alanine 1327–proline 1349. Positions aspartate 1377–threonine 1397 are enriched in polar residues. Positions glycine 1402–leucine 1412 are enriched in basic and acidic residues. Phosphoserine is present on serine 1439. Gly residues predominate over residues serine 1715–valine 1725. 2 stretches are compositionally biased toward basic and acidic residues: residues serine 1744–proline 1753 and proline 1784–proline 1794. Residues proline 1812–alanine 1823 show a composition bias toward pro residues. Composition is skewed to polar residues over residues arginine 1918–threonine 1927 and threonine 1975–aspartate 1989. At threonine 1924 the chain carries Phosphothreonine. A compositionally biased stretch (basic and acidic residues) spans glycine 2070–glutamate 2081. The segment covering proline 2091 to proline 2112 has biased composition (low complexity). Serine 2094 carries the post-translational modification Phosphoserine. The segment at proline 2116–proline 2153 is required for interaction with calcineurin. Phosphothreonine occurs at positions 2151 and 2154. Residues leucine 2207–isoleucine 2220 show a composition bias toward acidic residues.

As to quaternary structure, component of a complex that includes at least ASF1A, CABIN1, HIRA, histone H3.3 and UBN1. Interacts with calcineurin. Interacts with MEF2B. Activated through PKC-mediated hyperphosphorylation. Phosphorylation by the DNA damage kinases ATM and CHK2 enhances ubiquitination. Post-translationally, upon genotoxic stress, ubiquitination by the DCX(DDB2) E3 ubiquitin-protein ligase complex targets CABIN1 for proteasomal degradation, leading to the release of p53/TP53. In terms of tissue distribution, widely expressed in different tissues.

The protein resides in the nucleus. In terms of biological role, may be required for replication-independent chromatin assembly. May serve as a negative regulator of T-cell receptor (TCR) signaling via inhibition of calcineurin. Inhibition of activated calcineurin is dependent on both PKC and calcium signals. Acts as a negative regulator of p53/TP53 by keeping p53 in an inactive state on chromatin at promoters of a subset of it's target genes. The polypeptide is Calcineurin-binding protein cabin-1 (CABIN1) (Homo sapiens (Human)).